Consider the following 372-residue polypeptide: MFLTNLTLTNYRNYEHETLSFDQGVNIILGENAQGKTNMMEAIYVLAMAKSHRTTNDKDLIRWNEDYAKIEGRAEKRSGSLALELTISKKGKKARCNHIEQQRLSQYVGHLNVVMFAPEDLNLVKGSPQVRRRFIDMEIGQVSPVYIHDLSQYQKLLQQRNHYLKMMQAREQHDEAVLDVLTEQLMVLAAKITLRRRQFLALLEQWAMPIHHEISRGAERLHIRYEPSVDVSEKAELSRIVEAYSETFAAMREREIQRGTTLVGPHRDDIAFIVNGKNVQTFGSQGQQRTTALAVKLAEIELIFSELGDYPILLLDDVLSELDDFRQTHLLDAIRKKVQTFVTTTSIDGIKHDLIQEAAIYRVHSGSVAAPS.

Position 30–37 (Gly30–Thr37) interacts with ATP.

It belongs to the RecF family.

Its subcellular location is the cytoplasm. The RecF protein is involved in DNA metabolism; it is required for DNA replication and normal SOS inducibility. RecF binds preferentially to single-stranded, linear DNA. It also seems to bind ATP. This chain is DNA replication and repair protein RecF, found in Geobacillus thermodenitrificans (strain NG80-2).